We begin with the raw amino-acid sequence, 311 residues long: 4-diphosphocytidyl-2-C-methyl-D-erythritol kinase (311 aa).

Lys-10 is an active-site residue. 105-115 is a binding site for ATP; sequence PVAGGMAGGSA. The active site involves Asp-146.

It belongs to the GHMP kinase family. IspE subfamily.

The enzyme catalyses 4-CDP-2-C-methyl-D-erythritol + ATP = 4-CDP-2-C-methyl-D-erythritol 2-phosphate + ADP + H(+). The protein operates within isoprenoid biosynthesis; isopentenyl diphosphate biosynthesis via DXP pathway; isopentenyl diphosphate from 1-deoxy-D-xylulose 5-phosphate: step 3/6. Functionally, catalyzes the phosphorylation of the position 2 hydroxy group of 4-diphosphocytidyl-2C-methyl-D-erythritol. The sequence is that of 4-diphosphocytidyl-2-C-methyl-D-erythritol kinase from Corynebacterium glutamicum (strain ATCC 13032 / DSM 20300 / JCM 1318 / BCRC 11384 / CCUG 27702 / LMG 3730 / NBRC 12168 / NCIMB 10025 / NRRL B-2784 / 534).